We begin with the raw amino-acid sequence, 398 residues long: uncharacterized protein (398 aa).

The N-terminal stretch at 1–22 (MKLKFYKLPLITTAFSFVFLTA) is a signal peptide. The N-palmitoyl cysteine moiety is linked to residue Cys23. The S-diacylglycerol cysteine moiety is linked to residue Cys23.

The protein localises to the cell membrane. This is an uncharacterized protein from Mycoplasma genitalium (strain ATCC 33530 / DSM 19775 / NCTC 10195 / G37) (Mycoplasmoides genitalium).